A 155-amino-acid polypeptide reads, in one-letter code: Small ribosomal subunit protein uS9 (155 aa).

It belongs to the universal ribosomal protein uS9 family.

This Rhizobium etli (strain CIAT 652) protein is Small ribosomal subunit protein uS9.